Here is a 374-residue protein sequence, read N- to C-terminus: Glutamate 5-kinase (374 aa).

An ATP-binding site is contributed by Lys8. 3 residues coordinate substrate: Ser49, Asp136, and Asn148. ATP contacts are provided by residues 168-169 (TD) and 211-217 (TGGMQTK). Positions 276-354 (QGILTLDDGA…TQIRQILGYG (79 aa)) constitute a PUA domain.

Belongs to the glutamate 5-kinase family.

The protein localises to the cytoplasm. It catalyses the reaction L-glutamate + ATP = L-glutamyl 5-phosphate + ADP. Its pathway is amino-acid biosynthesis; L-proline biosynthesis; L-glutamate 5-semialdehyde from L-glutamate: step 1/2. Functionally, catalyzes the transfer of a phosphate group to glutamate to form L-glutamate 5-phosphate. The chain is Glutamate 5-kinase from Picosynechococcus sp. (strain ATCC 27264 / PCC 7002 / PR-6) (Agmenellum quadruplicatum).